The chain runs to 88 residues: Selenoprotein W (88 aa).

Positions 10–13 form a cross-link, cysteinyl-selenocysteine (Cys-Sec); redox-active; that stretch reads CGAU. A non-standard amino acid (selenocysteine) is located at residue Sec-13. The residue at position 37 (Cys-37) is an S-glutathionyl cysteine.

The protein belongs to the SelWTH family. Selenoprotein W subfamily. As to quaternary structure, interacts with DPYSL2, PRDX1, YWHAB, YWHAG, HSP70 and HSP90. As to expression, in the embryo, expressed in the developing nervous system and in mesoderm-derived tissues such as heart and limbs. In the adult, predominantly expressed in brain, skeletal muscle and heart.

The protein resides in the cytoplasm. Plays a role as a glutathione (GSH)-dependent antioxidant. May be involved in a redox-related process. May play a role in the myopathies of selenium deficiency. The chain is Selenoprotein W from Mus musculus (Mouse).